The sequence spans 361 residues: Cobalt-precorrin-5B C(1)-methyltransferase (361 aa).

Belongs to the CbiD family.

It carries out the reaction Co-precorrin-5B + S-adenosyl-L-methionine = Co-precorrin-6A + S-adenosyl-L-homocysteine. The protein operates within cofactor biosynthesis; adenosylcobalamin biosynthesis; cob(II)yrinate a,c-diamide from sirohydrochlorin (anaerobic route): step 6/10. Its function is as follows. Catalyzes the methylation of C-1 in cobalt-precorrin-5B to form cobalt-precorrin-6A. This Methylorubrum extorquens (strain CM4 / NCIMB 13688) (Methylobacterium extorquens) protein is Cobalt-precorrin-5B C(1)-methyltransferase.